The sequence spans 29 residues: Trypsin inhibitor 3 (29 aa).

Intrachain disulfides connect Cys-3-Cys-20, Cys-10-Cys-22, and Cys-16-Cys-28.

Belongs to the protease inhibitor I7 (squash-type serine protease inhibitor) family.

It is found in the secreted. In terms of biological role, strongly inhibits trypsin, weakly inhibits chymotrypsin. This Cyclanthera pedata (Achocha) protein is Trypsin inhibitor 3.